We begin with the raw amino-acid sequence, 203 residues long: Protein GrpE (203 aa).

Residues 1–20 (MSDNGDNNTKSPQHNNPQPN) are compositionally biased toward polar residues. The disordered stretch occupies residues 1 to 46 (MSDNGDNNTKSPQHNNPQPNEKSDGKVQPGQPQVNPQRKFTAGINK).

It belongs to the GrpE family. As to quaternary structure, homodimer.

It localises to the cytoplasm. Functionally, participates actively in the response to hyperosmotic and heat shock by preventing the aggregation of stress-denatured proteins, in association with DnaK and GrpE. It is the nucleotide exchange factor for DnaK and may function as a thermosensor. Unfolded proteins bind initially to DnaJ; upon interaction with the DnaJ-bound protein, DnaK hydrolyzes its bound ATP, resulting in the formation of a stable complex. GrpE releases ADP from DnaK; ATP binding to DnaK triggers the release of the substrate protein, thus completing the reaction cycle. Several rounds of ATP-dependent interactions between DnaJ, DnaK and GrpE are required for fully efficient folding. The chain is Protein GrpE from Ehrlichia chaffeensis (strain ATCC CRL-10679 / Arkansas).